Here is a 357-residue protein sequence, read N- to C-terminus: O-methyltransferase pgmB (357 aa).

Asp206 is a binding site for S-adenosyl-L-methionine. His256 acts as the Proton acceptor in catalysis.

The protein belongs to the class I-like SAM-binding methyltransferase superfamily. Cation-independent O-methyltransferase family.

It participates in pigment biosynthesis. Its pathway is secondary metabolite biosynthesis. O-methyltransferase; part of the gene cluster that mediates the biosynthesis of pleosporalin A, ascomycone A, as well as a third cryptic naphthoquinone derived pigment, all responsible for the coloration of conidia. Specifically methylates position C-6 of the pgmA product 3-acetonyl-1,6,8-trihydroxy-2-naphthaldehyde to yield fusarubinaldehyde. The pathway begins with the biosynthesis of the cyclized heptaketide 3-acetonyl-1,6,8-trihydroxy-2-naphthaldehyde by the NR-PKS pgmA. The C-6 hydroxyl group is further methylated by the O-methyltransferase pgmB to yield fusarubinaldehyde which is in turn oxidized by the cytochrome P450 monooxygenase pgmC at C-9. The C-1 hydroxyl group is then methylated spontaneously. Although pgmE, pgmD and pgmH are essential for the production of pleosporalin A, it is not the case for the 2 other final products and it remains difficult to assign a specific function to each enzyme. PgmF and pgmG seem not to be involved in pigment biosynthesis although they were regulated by the cluster-specific transcription factor pgmR. This is O-methyltransferase pgmB from Aspergillus terreus (strain NIH 2624 / FGSC A1156).